The chain runs to 373 residues: MEFKVEYKSANARACRIKTTHSEILTPAFMPVGTLAAIKSLDAIDMSEILDAKIILANTYHLYLRPSSKVIKQMGGLHGFSKFDRSFLTDSGGFQAFSLNKISKPDEEGIKFKSHIDGSLHYFTPKSVLDAQYDFNSDIMMILDDLVALPASKERIELSLKRTIKWAKEAIDYHKLKQNQGVGMGQNIFGIIQGGTDFEARRICSQALCEMDFDGLAIGGLSVGEENEVMYDTVEAMMPYVDNNRPRYLMGVGTPEDLVENVARGVDMFDCVMPTRNARNGTLFTSFGKFNIKKAEFITDHSPIDSKCSCYTCKNFSRAYLNHLFKAKELTFFRLASLHNLHYYLNLAKQMREAIIKNEFENFKKEFYRQRTC.

Aspartate 90 (proton acceptor) is an active-site residue. Residues 90-94 (DSGGF), aspartate 144, glutamine 193, and glycine 220 each bind substrate. The RNA binding stretch occupies residues 251-257 (GVGTPED). Aspartate 270 acts as the Nucleophile in catalysis. Residues 275–279 (TRNAR) are RNA binding; important for wobble base 34 recognition. Residues cysteine 308, cysteine 310, cysteine 313, and histidine 339 each contribute to the Zn(2+) site.

Belongs to the queuine tRNA-ribosyltransferase family. In terms of assembly, homodimer. Within each dimer, one monomer is responsible for RNA recognition and catalysis, while the other monomer binds to the replacement base PreQ1. It depends on Zn(2+) as a cofactor.

It carries out the reaction 7-aminomethyl-7-carbaguanine + guanosine(34) in tRNA = 7-aminomethyl-7-carbaguanosine(34) in tRNA + guanine. Its pathway is tRNA modification; tRNA-queuosine biosynthesis. Its function is as follows. Catalyzes the base-exchange of a guanine (G) residue with the queuine precursor 7-aminomethyl-7-deazaguanine (PreQ1) at position 34 (anticodon wobble position) in tRNAs with GU(N) anticodons (tRNA-Asp, -Asn, -His and -Tyr). Catalysis occurs through a double-displacement mechanism. The nucleophile active site attacks the C1' of nucleotide 34 to detach the guanine base from the RNA, forming a covalent enzyme-RNA intermediate. The proton acceptor active site deprotonates the incoming PreQ1, allowing a nucleophilic attack on the C1' of the ribose to form the product. After dissociation, two additional enzymatic reactions on the tRNA convert PreQ1 to queuine (Q), resulting in the hypermodified nucleoside queuosine (7-(((4,5-cis-dihydroxy-2-cyclopenten-1-yl)amino)methyl)-7-deazaguanosine). This Campylobacter lari (strain RM2100 / D67 / ATCC BAA-1060) protein is Queuine tRNA-ribosyltransferase.